The chain runs to 283 residues: Nucleotide-binding protein ABBFA_002973 (283 aa).

9–16 is a binding site for ATP; sequence GQSGSGKS. 59–62 contacts GTP; that stretch reads DVRS.

The protein belongs to the RapZ-like family.

In terms of biological role, displays ATPase and GTPase activities. The polypeptide is Nucleotide-binding protein ABBFA_002973 (Acinetobacter baumannii (strain AB307-0294)).